Consider the following 346-residue polypeptide: Glucose-6-phosphatase 3 (346 aa).

The Lumenal portion of the chain corresponds to 1–25 (MESTLSAGIMMAEALQNQLPGLENM). Residues 26-46 (WLWVTFLADPKNLFQFYFPAV) form a helical membrane-spanning segment. Over 47-56 (YYASRRLGIS) the chain is Cytoplasmic. Residues 57-77 (LFWIAFITEWLNLVFKWFLFG) traverse the membrane as a helical segment. Topologically, residues 78 to 115 (DRPFWWVHESGYSAQTPVQIHQFPSSCETGPGSPSGHC) are lumenal. Residue R79 participates in substrate binding. H114 acts as the Proton donor in catalysis. Residues 116-135 (MITGAALWPVMIAISSQVAS) form a helical membrane-spanning segment. At 136-140 (QTRSP) the chain is on the cytoplasmic side. Residues 141 to 162 (WVRVIPGLAYCTFLLAVGLSRV) traverse the membrane as a helical segment. Residue R161 coordinates substrate. The Lumenal portion of the chain corresponds to 163-167 (FLLAH). H167 acts as the Nucleophile in catalysis. A helical membrane pass occupies residues 168–186 (FPHQVLAGLLAGVILGWLL). Topologically, residues 187–197 (SPRVPMERELS) are cytoplasmic. A helical transmembrane segment spans residues 198 to 218 (FYGLTALTLMLGASLMYWTLF). Topologically, residues 219–254 (TLGLDLSWSINLASKWCDRPEWVLVDSRPFASLSRD) are lumenal. Residues 255–273 (SGSALGLGIALHTPCYAQI) form a helical membrane-spanning segment. Over 274 to 283 (RRVHLGNGQK) the chain is Cytoplasmic. The chain crosses the membrane as a helical span at residues 284–304 (IACFVLAMGLLVFLEWLGHPP). Residues 305–307 (QIS) lie on the Lumenal side of the membrane. Residues 308–328 (LFYIFNFLKFTLWPCLVVALV) form a helical membrane-spanning segment. Residues 329 to 346 (PWMVHTLSAQEAPPIRSS) lie on the Cytoplasmic side of the membrane.

It belongs to the glucose-6-phosphatase family. As to expression, expressed in liver and kidney. It is the major glucose-6-phosphatase expressed in the small intestine.

It localises to the endoplasmic reticulum membrane. It catalyses the reaction D-glucose 6-phosphate + H2O = D-glucose + phosphate. Its pathway is carbohydrate biosynthesis; gluconeogenesis. Its activity is regulated as follows. Inhibited by vanadate. Its function is as follows. Hydrolyzes glucose-6-phosphate to glucose in the endoplasmic reticulum. May form with the glucose-6-phosphate transporter (SLC37A4/G6PT) a ubiquitously expressed complex responsible for glucose production through glycogenolysis and gluconeogenesis. Probably required for normal neutrophil function. The sequence is that of Glucose-6-phosphatase 3 (G6pc3) from Rattus norvegicus (Rat).